Reading from the N-terminus, the 218-residue chain is Adenylate kinase (218 aa).

10–15 contributes to the ATP binding site; it reads GAGKGT. Residues 30-59 are NMP; the sequence is STGDMLRAAIAKGTPLGLSAQKIMESGGLV. Residues T31, R36, 57–59, 85–88, and Q92 each bind AMP; these read GLV and GFPR. Residues 122-159 form an LID region; sequence GRRIHQPSGRVYHVVNQPPKNPGVDDITGEPLIQRDDD. Residues R123 and 132 to 133 each bind ATP; that span reads VY. AMP contacts are provided by R156 and R167. G203 contacts ATP.

The protein belongs to the adenylate kinase family. In terms of assembly, monomer.

Its subcellular location is the cytoplasm. The catalysed reaction is AMP + ATP = 2 ADP. Its pathway is purine metabolism; AMP biosynthesis via salvage pathway; AMP from ADP: step 1/1. In terms of biological role, catalyzes the reversible transfer of the terminal phosphate group between ATP and AMP. Plays an important role in cellular energy homeostasis and in adenine nucleotide metabolism. In Legionella pneumophila (strain Corby), this protein is Adenylate kinase.